Consider the following 1183-residue polypeptide: Protein deacetylase HDAC6 (1183 aa).

Positions 1-61 (MTSTGQDSST…KGKMKKLSQP (61 aa)) are disordered. The segment covering 18–29 (NPQSPLQDSSAT) has biased composition (polar residues). At Ser-21 the chain carries Phosphoserine. Arg-32 carries the post-translational modification Omega-N-methylarginine. Residues 66 to 75 (LIVGLQGLDL) carry the Nuclear export signal motif. Histone deacetylase stretches follow at residues 86–434 (GLVF…TLLG) and 512–830 (GLVY…SLLG). Residue His-215 is the 1 of the active site. The 2 role is filled by His-641. Residues 972-1042 (ATENSANQTT…EAQEVQESEE (71 aa)) form a disordered region. Positions 980-996 (TTSGEEASGETESFGTS) are enriched in low complexity. A phosphothreonine mark is found at Thr-990, Thr-995, and Thr-1005. Over residues 997-1008 (PSSNASKQTTGA) the composition is skewed to polar residues. Ser-1009 is modified (phosphoserine). Residues 1021-1035 (ELGLSSTLELSSEAQ) show a composition bias toward low complexity. The segment at 1079 to 1177 (SWCPHLMAVC…NAAHQNKFGE (99 aa)) adopts a UBP-type zinc-finger fold. Zn(2+) is bound by residues Cys-1081, His-1083, Cys-1101, Cys-1104, Cys-1113, Cys-1116, and Cys-1121. Positions 1122 to 1124 (SRY) are ubiquitin binding. Zn(2+) contacts are provided by His-1128, His-1132, His-1138, Cys-1151, and Cys-1154. Positions 1150 to 1157 (WCYLCQAY) are ubiquitin binding.

Belongs to the histone deacetylase family. HD type 2 subfamily. Forms a trimeric complex in the nucleus consisting of BANP, HDAC6 and KHDRBS1/SAM68; HDAC6 keeps KHDRBS1 in a deacetylated state which inhibits the inclusion of CD44 alternate exons. The complex is disrupted by MAPK1/MAPK3-mediated phosphorylation of BANP which results in BANP export to the cytoplasm. This facilitates acetylation of KHDRBS1 and CD44 variant exon inclusion. Interacts with SIRT2 (via both phosphorylated, unphosphorylated, active or inactive forms); the interaction is necessary for the complex to interact with alpha-tubulin. Under proteasome impairment conditions, interacts with UBD via its histone deacetylase 1 and UBP-type zinc-finger regions. Interacts with BBIP1, CBFA2T3, CYLD, DDIT3/CHOP, ZMYND15, F-actin and HDAC11. Interacts with RIPOR2; this interaction occurs during early myogenic differentiation and prevents HDAC6 to deacetylate tubulin. Interacts with AURKA; AURKA-mediated phosphorylation of HDAC6 promotes deacetylation of alpha-tubulin. Interacts with DYSF; this interaction occurs during early myogenic differentiation. Interacts with TPPP; inhibiting the tubulin deacetylase activity of HDAC6. Interacts with DYNLL1. Interacts with ATP13A2; the interaction results in recruitment of HDAC6 to lysosomes to promote CTTN deacetylation. Interacts with CCDC141 (via the N-terminal region); inhibiting the deacetylase activity of HDAC6. Interacts with IPO7; the interaction facilitates HDAC6 nuclear translocation in dental papilla cells. Zn(2+) serves as cofactor. Post-translationally, phosphorylated by AURKA; phosphorylation increases HDAC6-mediated deacetylation of alpha-tubulin and subsequent disassembly of cilia. Ubiquitinated. Its polyubiquitination however does not lead to its degradation. In terms of processing, sumoylated in vitro.

The protein resides in the cytoplasm. It is found in the cytoskeleton. The protein localises to the nucleus. Its subcellular location is the perikaryon. It localises to the cell projection. The protein resides in the dendrite. It is found in the axon. The protein localises to the cilium. Its subcellular location is the microtubule organizing center. It localises to the centrosome. The protein resides in the cilium basal body. It catalyses the reaction N(6)-acetyl-L-lysyl-[protein] + H2O = L-lysyl-[protein] + acetate. The catalysed reaction is N(6)-acetyl-L-lysyl-[alpha-tubulin] + H2O = L-lysyl-[alpha-tubulin] + acetate. It participates in protein modification; protein ubiquitination. Deacetylates a wide range of non-histone substrates. Plays a central role in microtubule-dependent cell motility by mediating deacetylation of tubulin. Required for cilia disassembly via deacetylation of alpha-tubulin. Alpha-tubulin deacetylation results in destabilization of dynamic microtubules. Promotes deacetylation of CTTN, leading to actin polymerization, promotion of autophagosome-lysosome fusion and completion of autophagy. Deacetylates SQSTM1. Deacetylates peroxiredoxins PRDX1 and PRDX2, decreasing their reducing activity. Deacetylates antiviral protein RIGI in the presence of viral mRNAs which is required for viral RNA detection by RIGI. Sequentially deacetylates and polyubiquitinates DNA mismatch repair protein MSH2 which leads to MSH2 degradation, reducing cellular sensitivity to DNA-damaging agents and decreasing cellular DNA mismatch repair activities. Deacetylates DNA mismatch repair protein MLH1 which prevents recruitment of the MutL alpha complex (formed by the MLH1-PMS2 heterodimer) to the MutS alpha complex (formed by the MSH2-MSH6 heterodimer), leading to tolerance of DNA damage. Deacetylates RHOT1/MIRO1 which blocks mitochondrial transport and mediates axon growth inhibition. Deacetylates transcription factor SP1 which leads to increased expression of ENG, positively regulating angiogenesis. Deacetylates KHDRBS1/SAM68 which regulates alternative splicing by inhibiting the inclusion of CD44 alternate exons. Promotes odontoblast differentiation following IPO7-mediated nuclear import and subsequent repression of RUNX2 expression. In addition to its protein deacetylase activity, plays a key role in the degradation of misfolded proteins: when misfolded proteins are too abundant to be degraded by the chaperone refolding system and the ubiquitin-proteasome, mediates the transport of misfolded proteins to a cytoplasmic juxtanuclear structure called aggresome. Probably acts as an adapter that recognizes polyubiquitinated misfolded proteins and targets them to the aggresome, facilitating their clearance by autophagy. The protein is Protein deacetylase HDAC6 of Rattus norvegicus (Rat).